Here is a 197-residue protein sequence, read N- to C-terminus: ATP-dependent Clp protease proteolytic subunit (197 aa).

The active-site Nucleophile is S98. Residue H123 is part of the active site.

It belongs to the peptidase S14 family. In terms of assembly, fourteen ClpP subunits assemble into 2 heptameric rings which stack back to back to give a disk-like structure with a central cavity, resembling the structure of eukaryotic proteasomes.

The protein resides in the cytoplasm. The enzyme catalyses Hydrolysis of proteins to small peptides in the presence of ATP and magnesium. alpha-casein is the usual test substrate. In the absence of ATP, only oligopeptides shorter than five residues are hydrolyzed (such as succinyl-Leu-Tyr-|-NHMec, and Leu-Tyr-Leu-|-Tyr-Trp, in which cleavage of the -Tyr-|-Leu- and -Tyr-|-Trp bonds also occurs).. In terms of biological role, cleaves peptides in various proteins in a process that requires ATP hydrolysis. Has a chymotrypsin-like activity. Plays a major role in the degradation of misfolded proteins. The protein is ATP-dependent Clp protease proteolytic subunit of Anaplasma phagocytophilum (strain HZ).